Reading from the N-terminus, the 466-residue chain is Asparagine--tRNA ligase (466 aa).

The protein belongs to the class-II aminoacyl-tRNA synthetase family. As to quaternary structure, homodimer.

The protein localises to the cytoplasm. It carries out the reaction tRNA(Asn) + L-asparagine + ATP = L-asparaginyl-tRNA(Asn) + AMP + diphosphate + H(+). This chain is Asparagine--tRNA ligase, found in Aeromonas hydrophila subsp. hydrophila (strain ATCC 7966 / DSM 30187 / BCRC 13018 / CCUG 14551 / JCM 1027 / KCTC 2358 / NCIMB 9240 / NCTC 8049).